Here is a 360-residue protein sequence, read N- to C-terminus: Phospho-N-acetylmuramoyl-pentapeptide-transferase (360 aa).

The next 10 membrane-spanning stretches (helical) occupy residues 26 to 46, 70 to 90, 94 to 114, 132 to 152, 168 to 188, 199 to 219, 236 to 256, 263 to 283, 288 to 308, and 338 to 358; these read AILS…IMIK, GTPT…ILLW, SNPY…VGFV, WKYF…YAYG, VMPQ…VGTS, GLAI…AWAT, ASEL…FLWF, VFMG…IAVL, LVLV…ILQV, and VIVR…ATLK.

The protein belongs to the glycosyltransferase 4 family. MraY subfamily. Mg(2+) is required as a cofactor.

Its subcellular location is the cell inner membrane. The enzyme catalyses UDP-N-acetyl-alpha-D-muramoyl-L-alanyl-gamma-D-glutamyl-meso-2,6-diaminopimeloyl-D-alanyl-D-alanine + di-trans,octa-cis-undecaprenyl phosphate = di-trans,octa-cis-undecaprenyl diphospho-N-acetyl-alpha-D-muramoyl-L-alanyl-D-glutamyl-meso-2,6-diaminopimeloyl-D-alanyl-D-alanine + UMP. It participates in cell wall biogenesis; peptidoglycan biosynthesis. In terms of biological role, catalyzes the initial step of the lipid cycle reactions in the biosynthesis of the cell wall peptidoglycan: transfers peptidoglycan precursor phospho-MurNAc-pentapeptide from UDP-MurNAc-pentapeptide onto the lipid carrier undecaprenyl phosphate, yielding undecaprenyl-pyrophosphoryl-MurNAc-pentapeptide, known as lipid I. In Vibrio parahaemolyticus serotype O3:K6 (strain RIMD 2210633), this protein is Phospho-N-acetylmuramoyl-pentapeptide-transferase.